We begin with the raw amino-acid sequence, 344 residues long: Heat-inducible transcription repressor HrcA (344 aa).

Belongs to the HrcA family.

Negative regulator of class I heat shock genes (grpE-dnaK-dnaJ and groELS operons). Prevents heat-shock induction of these operons. The protein is Heat-inducible transcription repressor HrcA of Streptococcus equi subsp. zooepidemicus (strain H70).